Here is a 622-residue protein sequence, read N- to C-terminus: Low affinity potassium transport system protein Kup (622 aa).

The next 12 membrane-spanning stretches (helical) occupy residues 9 to 29 (LPAI…TSPL), 49 to 69 (VFGF…IKYL), 103 to 123 (VIMG…TPAI), 137 to 157 (PQLD…LFMI), 165 to 185 (VGKL…VLGL), 213 to 233 (VSFI…ALYA), 247 to 267 (WFTV…ALLL), 276 to 296 (PFFL…AALA), 337 to 357 (IYIP…IVSF), 363 to 383 (LAAA…ILST), 396 to 416 (FVAL…SANL), and 419 to 439 (LLSG…IMTT).

The protein belongs to the HAK/KUP transporter (TC 2.A.72) family.

It is found in the cell inner membrane. It catalyses the reaction K(+)(in) + H(+)(in) = K(+)(out) + H(+)(out). Responsible for the low-affinity transport of potassium into the cell. Likely operates as a K(+):H(+) symporter. This is Low affinity potassium transport system protein Kup from Salmonella paratyphi B (strain ATCC BAA-1250 / SPB7).